The sequence spans 508 residues: Pyruvate kinase (508 aa).

R56 serves as a coordination point for substrate. K(+)-binding residues include N58, S60, D90, and T91. Residue 58–61 (NFSH) participates in ATP binding. The ATP site is built by R97 and K185. E251 serves as a coordination point for Mg(2+). Substrate is bound by residues G274, D275, and T307. A Mg(2+)-binding site is contributed by D275.

The protein belongs to the pyruvate kinase family. As to quaternary structure, homotetramer. The cofactor is Mg(2+). K(+) is required as a cofactor.

It catalyses the reaction pyruvate + ATP = phosphoenolpyruvate + ADP + H(+). Its pathway is carbohydrate degradation; glycolysis; pyruvate from D-glyceraldehyde 3-phosphate: step 5/5. Regulated by phosphoenolpyruvate substrate and is allosterically activated by ribose-5-phosphate, AMP and other nucleoside monophosphates but not by fructose-1,6-bisphosphate. In Mycoplasma pneumoniae (strain ATCC 29342 / M129 / Subtype 1) (Mycoplasmoides pneumoniae), this protein is Pyruvate kinase (pyk).